The chain runs to 323 residues: Aldo-keto reductase family 1 member C23-like protein (323 aa).

NADP(+) is bound at residue 20–24 (GFGTY). Substrate is bound at residue Lys31. Position 50 (Asp50) interacts with NADP(+). The Proton donor role is filled by Tyr55. His117 is a substrate binding site. Residues 166-167 (SN), Gln190, 216-222 (YGALGTQ), and 270-280 (KSYNEKRIKEN) each bind NADP(+).

Belongs to the aldo/keto reductase family. Monomer. Detected in endometrium surface epithelium (at protein level). Detected in endometrium.

The protein resides in the cytoplasm. In terms of biological role, NADP-dependent oxidoreductase involved in steroid metabolism. May act on various hydroxysteroids. In Equus caballus (Horse), this protein is Aldo-keto reductase family 1 member C23-like protein (PGFS).